An 83-amino-acid polypeptide reads, in one-letter code: Large ribosomal subunit protein eL14 (83 aa).

Belongs to the eukaryotic ribosomal protein eL14 family.

The chain is Large ribosomal subunit protein eL14 from Thermococcus onnurineus (strain NA1).